A 358-amino-acid chain; its full sequence is Aromatic amino acid aminotransferase (358 aa).

Residue K219 is modified to N6-(pyridoxal phosphate)lysine.

Belongs to the class-II pyridoxal-phosphate-dependent aminotransferase family. In terms of assembly, homodimer. Requires pyridoxal 5'-phosphate as cofactor.

It carries out the reaction an aromatic L-alpha-amino acid + 2-oxoglutarate = an aromatic oxo-acid + L-glutamate. Aminotransferase that catalyzes the conversion of aromatic amino acids and 2-oxoglutarate into corresponding aromatic oxo acids and L-glutamate. The chain is Aromatic amino acid aminotransferase from Nocardia farcinica (strain IFM 10152).